Here is a 792-residue protein sequence, read N- to C-terminus: MLSNHLQNGIESDNLLWSRVPESDDTSTDDITLLNSHRDGDGGVNSLDYEVIENYAYREEQAHRGKLYVGYYVAVKWFFSLLIGIGTGLAAVFINLSVENFAGWKFALTFAIIQKSYFAGFIVYLLINLVLVFSSAYIITQFAPAAAGSGIPEIKGYLNGIDIPGTLLFRTLIGKIFGSIGSVGGGLALGKEGPLVHTGACIASLLGQGGSTKYHLNSRWPQLFKSDRDRRDLVTCGCAAGVAAAFRAPVGGVLFALEEVTSWWRSQLMWRVFFTSAIVAVVVRTAMGWCKSGICGHFGGGGFIIWDVSDGQDDYYFKELLPMAVIGVIGGLLGALFNQLTLYMTSWRRNSLHKKGNRVKIIEACIISCITSAISFGLPLLRKCSPCPESVPDSGIECPRPPGMYGNYVNFFCKTDNEYNDLATIFFNTQDDAIRNLFSAKTMREFSAQSLLTFLAMFYTLAVVTFGTAVPAGQFVPGIMIGSTYGRLVGMFVVRFYKKLNIEEGTYALLGAASFLGGSMRMTVSLCVIMVEITNNLKLLPLIMLVLLISKAVGDAFNEGLYEVQARLKGIPLLESRPKYHMRQMIAKEACQSQKVISLPRVIRVADVASILGSNKHNGFPVIDHTRSGETLVIGLVLRSHLLVLLQSKVDFQHSPLPCDPSARNIRHSFSEFAKPVSSKGLCIEDIHLTSDDLEMYIDLAPFLNPSPYVVPEDMSLTKVYNLFRQLGLRHLFVVPRPSRVIGLITRKDLLIEENGESSAVELQQSTSVRGRYSETATRMDAARPLLDDLLG.

12 helical membrane-spanning segments follow: residues 78–98 (FFSL…NLSV), 119–139 (AGFI…AYII), 170–190 (RTLI…LALG), 195–215 (LVHT…TKYH), 237–257 (GCAA…LFAL), 267–287 (QLMW…RTAM), 320–340 (LLPM…FNQL), 361–381 (IIEA…LPLL), 451–471 (LLTF…TAVP), 474–494 (QFVP…MFVV), 508–528 (ALLG…SLCV), and 529–549 (IMVE…VLLI). 2 consecutive CBS domains span residues 592–652 (QSQK…KVDF) and 704–761 (LNPS…SSAV). A helical membrane pass occupies residues 731–751 (HLFVVPRPSRVIGLITRKDLL).

This sequence belongs to the chloride channel (TC 2.A.49) family. As to quaternary structure, homodimer. Broadly expressed in the plant, but predominantly in the silique.

The protein localises to the membrane. Functionally, voltage-gated chloride channel. The polypeptide is Chloride channel protein CLC-d (CLC-D) (Arabidopsis thaliana (Mouse-ear cress)).